The following is a 123-amino-acid chain: UPF0738 protein BCE_1319 (123 aa).

It belongs to the UPF0738 family.

This chain is UPF0738 protein BCE_1319, found in Bacillus cereus (strain ATCC 10987 / NRS 248).